The primary structure comprises 87 residues: MAKGQSLQDPFLNALRRERIPVSIYLVNGIKLQGQIESFDQFVILLKNTVSQMVYKHAISTVVPARAVNHHQHAPGAAGEEQGEAEA.

In terms of domain architecture, Sm spans 9 to 68; that stretch reads DPFLNALRRERIPVSIYLVNGIKLQGQIESFDQFVILLKNTVSQMVYKHAISTVVPARAV.

This sequence belongs to the Hfq family. Homohexamer.

Functionally, RNA chaperone that binds small regulatory RNA (sRNAs) and mRNAs to facilitate mRNA translational regulation in response to envelope stress, environmental stress and changes in metabolite concentrations. Also binds with high specificity to tRNAs. This chain is RNA-binding protein Hfq, found in Aeromonas hydrophila subsp. hydrophila (strain ATCC 7966 / DSM 30187 / BCRC 13018 / CCUG 14551 / JCM 1027 / KCTC 2358 / NCIMB 9240 / NCTC 8049).